Here is a 541-residue protein sequence, read N- to C-terminus: Zinc finger protein 513 (541 aa).

Residues 1–118 are disordered; that stretch reads MPRRKQSHPQ…GEARGERPGP (118 aa). Positions 44–57 are enriched in acidic residues; the sequence is LEFEEEEEEEEGDG. Ser-85 and Ser-96 each carry phosphoserine. Over residues 103-115 the composition is skewed to basic and acidic residues; sequence EPARGPGEARGER. C2H2-type zinc fingers lie at residues 150–172, 178–200, 206–228, 360–382, 388–410, 416–438, 444–466, and 472–494; these read YSCR…MQTH, FRCG…TRTH, YRCP…QRTH, FACS…MKTH, FRCA…QRVH, YKCP…GRIH, FRCS…MLRH, and FRCA…QKVH. The disordered stretch occupies residues 492 to 541; the sequence is KVHGHGGAGGPGLSASEGWAPPHSPPSVLSSRGPPALGTAGSRAVHTDSS.

This sequence belongs to the krueppel C2H2-type zinc-finger protein family. As to quaternary structure, binds DNA. Can associate with the proximal promoter regions of PAX6 and SP4, and their known targets including ARR3, RHO, OPN1MW2 and OPN1SW. As to expression, in the retina, expressed in the outer and inner nuclear layers, and the ganglion cell layer.

The protein localises to the nucleus. Its function is as follows. Transcriptional regulator that plays a role in retinal development and maintenance. The sequence is that of Zinc finger protein 513 (ZNF513) from Homo sapiens (Human).